Reading from the N-terminus, the 365-residue chain is Zinc finger TRAF-type-containing protein 1-B (365 aa).

A disordered region spans residues 1–56; that stretch reads MSEEREAPGPLASSSAGLGAEVGQEEVPGGAGPARLLLLPSDSDGPPKKRLRSEAE. The RING-type; degenerate zinc finger occupies 72 to 117; the sequence is CAVCLDLPKASVYQCTNGHLMCAGCFIHLLADARLKEEQATCPNCR. Residues 113–186 form a TRAF-type zinc finger; the sequence is CPNCRCEISK…PWQGPYHELT (74 aa).

It belongs to the ZFTRAF1 family. In terms of assembly, interacts with LGALS3.

Its subcellular location is the cytoplasm. The sequence is that of Zinc finger TRAF-type-containing protein 1-B from Xenopus laevis (African clawed frog).